The primary structure comprises 123 residues: Small ribosomal subunit protein uS12 (123 aa).

The interval 1 to 28 (MPTIQQLIRNPREPKRTRTKTPALKACP) is disordered. At aspartate 89 the chain carries 3-methylthioaspartic acid. Residues 104–123 (TQPVKNRKQRRSHYGAKKPK) are disordered. Positions 108–123 (KNRKQRRSHYGAKKPK) are enriched in basic residues.

Belongs to the universal ribosomal protein uS12 family. In terms of assembly, part of the 30S ribosomal subunit. Contacts proteins S8 and S17. May interact with IF1 in the 30S initiation complex.

With S4 and S5 plays an important role in translational accuracy. In terms of biological role, interacts with and stabilizes bases of the 16S rRNA that are involved in tRNA selection in the A site and with the mRNA backbone. Located at the interface of the 30S and 50S subunits, it traverses the body of the 30S subunit contacting proteins on the other side and probably holding the rRNA structure together. The combined cluster of proteins S8, S12 and S17 appears to hold together the shoulder and platform of the 30S subunit. The chain is Small ribosomal subunit protein uS12 from Hyphomonas neptunium (strain ATCC 15444).